A 583-amino-acid chain; its full sequence is CD166 antigen (583 aa).

The first 27 residues, 1-27 (MASKVSPSCRLVFCLLISAAVLRPGLG), serve as a signal peptide directing secretion. 2 Ig-like V-type domains span residues 28–120 (WYTV…TEDN) and 125–234 (PTLV…KTIY). The Extracellular segment spans residues 28–527 (WYTVNSAYGD…NREKVNDQAK (500 aa)). 2 disulfide bridges follow: Cys43–Cys113 and Cys157–Cys220. N-linked (GlcNAc...) asparagine glycosylation is found at Asn95, Asn167, Asn265, Asn306, Asn361, Asn457, Asn480, and Asn499. 3 consecutive Ig-like C2-type domains span residues 245 to 328 (PTEQ…TTIT), 333 to 409 (DLSL…ESLT), and 416 to 501 (PQIK…LNVS). 3 disulfide bridges follow: Cys270–Cys313, Cys354–Cys392, and Cys435–Cys485. A helical transmembrane segment spans residues 528–549 (LIVGIVVGLLLAALVAGVVYWL). Topologically, residues 550 to 583 (YMKKSKTASKHVNKDLGNMEENKKLEENNHKTEA) are cytoplasmic. A disordered region spans residues 562-583 (NKDLGNMEENKKLEENNHKTEA). Over residues 569-583 (EENKKLEENNHKTEA) the composition is skewed to basic and acidic residues.

In terms of assembly, homodimer. Interacts (via extracellular domain) with CD6 (via extracellular domain). Homodimerization and interaction with CD6 involve the same region and cannot occur simultaneously. The affinity for CD6 is much higher than the affinity for self-association. Interacts (via glycosylated extracellular domain) with LGALS1 and LGALS3. Interaction with LGALS1 or LGALS3 inhibits interaction with CD6. In terms of processing, glycosylated. As to expression, detected on brain motor neurons, in differentiating retinal ganglion cells and in adult retina. Detected on leukocytes and on lymphatic endothelial cells. Detected in spleen B cells and T-cells (at protein level). Detected in adult brain and embryonic spinal cord. Expressed at high levels in the brain, and lung, and at lower levels in the liver, and the kidney, as well as by activated leukocytes.

It localises to the cell membrane. Its subcellular location is the cell projection. The protein localises to the axon. The protein resides in the dendrite. Cell adhesion molecule that mediates both heterotypic cell-cell contacts via its interaction with CD6, as well as homotypic cell-cell contacts. Promotes T-cell activation and proliferation via its interactions with CD6. Contributes to the formation and maturation of the immunological synapse via its interactions with CD6. Mediates homotypic interactions with cells that express ALCAM. Mediates attachment of dendritic cells onto endothelial cells via homotypic interaction. Inhibits endothelial cell migration and promotes endothelial tube formation via homotypic interactions. Required for normal organization of the lymph vessel network. Required for normal hematopoietic stem cell engraftment in the bone marrow. Plays a role in hematopoiesis; required for normal numbers of hematopoietic stem cells in bone marrow. Promotes in vitro osteoblast proliferation and differentiation. Promotes neurite extension, axon growth and axon guidance; axons grow preferentially on surfaces that contain ALCAM. Mediates outgrowth and pathfinding for retinal ganglion cell axons. This is CD166 antigen (Alcam) from Mus musculus (Mouse).